Here is a 396-residue protein sequence, read N- to C-terminus: Flavohemoprotein (396 aa).

A Globin domain is found at 1–136 (MLDAQTIATV…LANVFIHREA (136 aa)). H85 lines the heme b pocket. Residues Y95 and E135 each act as charge relay system in the active site. The segment at 147 to 396 (GGWEGTRPFR…YECFGPHKVL (250 aa)) is reductase. The FAD-binding FR-type domain occupies 150-255 (EGTRPFRIVA…AAPAGDFFMN (106 aa)). FAD contacts are provided by residues Y188 and 204–207 (RQYS). 268–273 (GVGQTP) is an NADP(+) binding site. 389–392 (CFGP) provides a ligand contact to FAD.

The protein belongs to the globin family. Two-domain flavohemoproteins subfamily. It in the C-terminal section; belongs to the flavoprotein pyridine nucleotide cytochrome reductase family. Monomer. Heme b is required as a cofactor. Requires FAD as cofactor.

The catalysed reaction is 2 nitric oxide + NADPH + 2 O2 = 2 nitrate + NADP(+) + H(+). It catalyses the reaction 2 nitric oxide + NADH + 2 O2 = 2 nitrate + NAD(+) + H(+). Its function is as follows. Is involved in NO detoxification in an aerobic process, termed nitric oxide dioxygenase (NOD) reaction that utilizes O(2) and NAD(P)H to convert NO to nitrate, which protects the bacterium from various noxious nitrogen compounds. Therefore, plays a central role in the inducible response to nitrosative stress. This chain is Flavohemoprotein (hmp), found in Salmonella typhimurium (strain LT2 / SGSC1412 / ATCC 700720).